The sequence spans 475 residues: Glycogen synthase (475 aa).

Lysine 15 provides a ligand contact to ADP-alpha-D-glucose.

It belongs to the glycosyltransferase 1 family. Bacterial/plant glycogen synthase subfamily.

The enzyme catalyses [(1-&gt;4)-alpha-D-glucosyl](n) + ADP-alpha-D-glucose = [(1-&gt;4)-alpha-D-glucosyl](n+1) + ADP + H(+). It functions in the pathway glycan biosynthesis; glycogen biosynthesis. Its function is as follows. Synthesizes alpha-1,4-glucan chains using ADP-glucose. In Clostridium kluyveri (strain ATCC 8527 / DSM 555 / NBRC 12016 / NCIMB 10680 / K1), this protein is Glycogen synthase.